The primary structure comprises 362 residues: S-adenosylmethionine-dependent nucleotide dehydratase RSAD2 (362 aa).

Positions 49-71 are disordered; sequence QQLQGKTEAGEPPRAQEDSHLPT. Basic and acidic residues predominate over residues 56 to 68; it reads EAGEPPRAQEDSH. The region spanning 70-290 is the Radical SAM core domain; sequence PTTPTSVNYH…LDRHKDVSCL (221 aa). [4Fe-4S] cluster-binding residues include Cys-84, Cys-88, and Cys-91. Lys-198 carries the N6-acetyllysine modification. A Glycyl lysine isopeptide (Lys-Gly) (interchain with G-Cter in ubiquitin) cross-link involves residue Lys-207.

The protein belongs to the radical SAM superfamily. RSAD2 family. As to quaternary structure, homodimer. Interacts with IRAK1 and TRAF6. Interacts with FPPS. Interacts with HADHB. Interacts (via C-terminus) with VAPA/VAP33 (via C-terminus). It depends on [4Fe-4S] cluster as a cofactor. Post-translationally, acetylated by HAT1. HAT1-mediated acetylation of Lys-198 in turn recruits UBE4A that stimulates RSAD2 polyubiquitination leading to proteasomal degradation. 'Lys-6'-linked polyubiquitination at Lys-207 leads to RSAD2 protein degradation.

The protein localises to the endoplasmic reticulum membrane. It localises to the golgi apparatus. Its subcellular location is the endoplasmic reticulum. The protein resides in the lipid droplet. It is found in the mitochondrion. The protein localises to the mitochondrion inner membrane. It localises to the mitochondrion outer membrane. It catalyses the reaction CTP + AH2 + S-adenosyl-L-methionine = 3'-deoxy-3',4'-didehydro-CTP + 5'-deoxyadenosine + L-methionine + A + H2O + H(+). With respect to regulation, IRAK1 and TRAF6 synergistically activate RSAD2 increasing its activity with CTP as substrate about 10-fold. Functionally, interferon-inducible antiviral protein which plays a major role in the cell antiviral state induced by type I and type II interferon. Catalyzes the conversion of cytidine triphosphate (CTP) to 3'-deoxy-3',4'-didehydro-CTP (ddhCTP) via a SAM-dependent radical mechanism. In turn, ddhCTP acts as a chain terminator for the RNA-dependent RNA polymerases from multiple viruses and directly inhibits viral replication. Therefore, inhibits a wide range of DNA and RNA viruses. Also promotes TLR7 and TLR9-dependent production of IFN-beta production in plasmacytoid dendritic cells (pDCs) by facilitating 'Lys-63'-linked ubiquitination of IRAK1 by TRAF6. Plays a role in CD4+ T-cells activation and differentiation. Facilitates T-cell receptor (TCR)-mediated GATA3 activation and optimal T-helper 2 (Th2) cytokine production by modulating NFKB1 and JUNB activities. Can inhibit secretion of soluble proteins. The sequence is that of S-adenosylmethionine-dependent nucleotide dehydratase RSAD2 from Sus scrofa (Pig).